The following is a 266-amino-acid chain: 3-methyl-2-oxobutanoate hydroxymethyltransferase (266 aa).

Residues Asp-43 and Asp-82 each coordinate Mg(2+). 3-methyl-2-oxobutanoate contacts are provided by residues 43–44, Asp-82, and Lys-110; that span reads DS. Mg(2+) is bound at residue Glu-112. Catalysis depends on Glu-179, which acts as the Proton acceptor.

This sequence belongs to the PanB family. Homodecamer; pentamer of dimers. Mg(2+) is required as a cofactor.

Its subcellular location is the cytoplasm. It carries out the reaction 3-methyl-2-oxobutanoate + (6R)-5,10-methylene-5,6,7,8-tetrahydrofolate + H2O = 2-dehydropantoate + (6S)-5,6,7,8-tetrahydrofolate. Its pathway is cofactor biosynthesis; (R)-pantothenate biosynthesis; (R)-pantoate from 3-methyl-2-oxobutanoate: step 1/2. In terms of biological role, catalyzes the reversible reaction in which hydroxymethyl group from 5,10-methylenetetrahydrofolate is transferred onto alpha-ketoisovalerate to form ketopantoate. The protein is 3-methyl-2-oxobutanoate hydroxymethyltransferase of Psychrobacter cryohalolentis (strain ATCC BAA-1226 / DSM 17306 / VKM B-2378 / K5).